Consider the following 269-residue polypeptide: GATA transcription factor 3 (269 aa).

The Nuclear localization signal signature appears at 136-143 (KPRTKRSR). Residues 176 to 230 (LVFQRRCSHCGTNNTPQWRTGPVGPKTLCNACGVRFKSGRLCPEYRPADSPTFSN) form a GATA-type zinc finger. The disordered stretch occupies residues 245–269 (KSKELGEETGEASTKSDPVKFGSKW).

Belongs to the type IV zinc-finger family. Class A subfamily. Mostly expressed in roots. Also expressed in stems, flowers and leaves.

Its subcellular location is the nucleus. In terms of biological role, transcriptional activator that specifically binds 5'-GATA-3' or 5'-GAT-3' motifs within gene promoters. May be involved in the regulation of some light-responsive genes. The sequence is that of GATA transcription factor 3 (GATA3) from Arabidopsis thaliana (Mouse-ear cress).